The sequence spans 192 residues: Protein Syd (192 aa).

The protein belongs to the Syd family.

The protein localises to the cell inner membrane. In terms of biological role, interacts with the SecY protein in vivo. May bind preferentially to an uncomplexed state of SecY, thus functioning either as a chelating agent for excess SecY in the cell or as a regulatory factor that negatively controls the translocase function. This is Protein Syd from Hahella chejuensis (strain KCTC 2396).